A 164-amino-acid chain; its full sequence is Protein SprT (164 aa).

In terms of domain architecture, SprT-like spans 13 to 156; the sequence is YQQAEAFFKR…LCKRCREILV (144 aa). Zn(2+) is bound at residue H69. E70 is a catalytic residue. Position 73 (H73) interacts with Zn(2+).

The protein belongs to the SprT family. Zn(2+) is required as a cofactor.

Its subcellular location is the cytoplasm. This Pseudomonas putida (strain ATCC 700007 / DSM 6899 / JCM 31910 / BCRC 17059 / LMG 24140 / F1) protein is Protein SprT.